A 64-amino-acid chain; its full sequence is Large ribosomal subunit protein bL35 (64 aa).

Basic residues predominate over residues 1 to 15 (MPKNKTHSGTAKRFR). Positions 1–27 (MPKNKTHSGTAKRFRVTGSGKLRREQA) are disordered.

This sequence belongs to the bacterial ribosomal protein bL35 family.

The protein is Large ribosomal subunit protein bL35 of Saccharopolyspora erythraea (strain ATCC 11635 / DSM 40517 / JCM 4748 / NBRC 13426 / NCIMB 8594 / NRRL 2338).